Reading from the N-terminus, the 159-residue chain is Peptide deformylase (159 aa).

Fe cation contacts are provided by Cys-88 and His-130. Glu-131 is an active-site residue. His-134 serves as a coordination point for Fe cation.

It belongs to the polypeptide deformylase family. Fe(2+) serves as cofactor.

It catalyses the reaction N-terminal N-formyl-L-methionyl-[peptide] + H2O = N-terminal L-methionyl-[peptide] + formate. Functionally, removes the formyl group from the N-terminal Met of newly synthesized proteins. Requires at least a dipeptide for an efficient rate of reaction. N-terminal L-methionine is a prerequisite for activity but the enzyme has broad specificity at other positions. This Thermoanaerobacter pseudethanolicus (strain ATCC 33223 / 39E) (Clostridium thermohydrosulfuricum) protein is Peptide deformylase.